Here is a 122-residue protein sequence, read N- to C-terminus: Small ribosomal subunit protein bS16 (122 aa).

Residues 81–122 (GLMKRDAKNNPKKGEPGEKAKERAKERAEKAAAGSTEDAAAE) are disordered. Over residues 83–110 (MKRDAKNNPKKGEPGEKAKERAKERAEK) the composition is skewed to basic and acidic residues. The span at 111-122 (AAAGSTEDAAAE) shows a compositional bias: low complexity.

Belongs to the bacterial ribosomal protein bS16 family.

The polypeptide is Small ribosomal subunit protein bS16 (Xanthobacter autotrophicus (strain ATCC BAA-1158 / Py2)).